The chain runs to 234 residues: Cyclo(L-leucyl-L-leucyl) synthase (234 aa).

S28 acts as the Nucleophile in catalysis. Substrate-binding positions include 171 to 175 (YVLAE), Y195, and 200 to 201 (EL).

Belongs to the CDPS family.

It carries out the reaction 2 L-leucyl-tRNA(Leu) = cyclo(L-leucyl-L-leucyl) + 2 tRNA(Leu) + 2 H(+). It uses activated amino acids in the form of aminoacyl-tRNAs (aa-tRNAs) as substrates to catalyze the ATP-independent formation of cyclodipeptides which are intermediates in diketopiperazine (DKP) biosynthetic pathways. Catalyzes the formation of cyclo(L-Leu-L-Leu) (cLL) from L-leucyl-tRNA(Leu). Can incorporate various nonpolar residues, such as L-phenylalanine, L-leucine and L-methionine, into cyclodipeptides. This chain is Cyclo(L-leucyl-L-leucyl) synthase, found in Staphylococcus haemolyticus (strain JCSC1435).